The following is a 437-amino-acid chain: MLITKTAFLAFLLSSVPLAHGAGGNSSSPDARGRRCVVRSSNGTADDSPEVSRVFAQCATNSVIVFQEGVDYNIFQPIKATNLSNVEIQMHGNLHLPQNISAVRDIVNAGTSTWFTLEGPRVDWTGPEDVNNGWIKSYGQAWWDANPPNGTGISGRPHLMSYKTSQATIKYFRSGKPIAWNMKLHGEDIAVSHAIVDASSTGSFPFNTDAFDVQGTNIRISDSIMYNGDDAIAVGSDSHNIVFERNTIGYQSHGMSIGSLGKDASAFANITNLRFEDVTVIDALYAARFKSWTGGQGLVKNVTWKNIRVYNVTFPIFVTQSYYDQSVSRDGVDTESSVMMEDFTWEDFSGSINSYQPGDGSCATDPCWYNAGLPNLKHTEALVIECNTDKSCKNFVTKNIQLYPQVLEPASVICMKATAELNPNLGFNCSNGTFTSA.

The signal sequence occupies residues 1 to 21 (MLITKTAFLAFLLSSVPLAHG). 5 N-linked (GlcNAc...) asparagine glycosylation sites follow: Asn25, Asn42, Asn82, Asn99, and Asn149. 2 PbH1 repeats span residues 215–236 (GTNIRISDSIMYNGDDAIAVGS) and 238–259 (SHNIVFERNTIGYQSHGMSIGS). The active-site Proton donor is the Asp229. His253 is an active-site residue. N-linked (GlcNAc...) asparagine glycosylation is present at Asn269. 2 PbH1 repeats span residues 270-291 (ITNLRFEDVTVIDALYAARFKS) and 299-320 (VKNVTWKNIRVYNVTFPIFVTQ). 2 N-linked (GlcNAc...) asparagine glycosylation sites follow: Asn301 and Asn311. Cysteines 386 and 392 form a disulfide. Residues Asn428 and Asn431 are each glycosylated (N-linked (GlcNAc...) asparagine).

Belongs to the glycosyl hydrolase 28 family.

It localises to the secreted. The enzyme catalyses [(1-&gt;4)-alpha-D-galacturonosyl](n) + H2O = alpha-D-galacturonate + [(1-&gt;4)-alpha-D-galacturonosyl](n-1). Functionally, specific in hydrolyzing the terminal glycosidic bond of polygalacturonic acid and oligogalacturonates. In Aspergillus flavus (strain ATCC 200026 / FGSC A1120 / IAM 13836 / NRRL 3357 / JCM 12722 / SRRC 167), this protein is Probable exopolygalacturonase C (pgxC).